We begin with the raw amino-acid sequence, 125 residues long: Cytochrome c2 (125 aa).

The signal sequence occupies residues 1–21; it reads MKAIKIAMVGAALVWSASAYA. The 101-residue stretch at 23-123 folds into the Cytochrome c domain; sequence GDPVKGEQVF…DVIAFLATQH (101 aa). Heme c is bound by residues Cys-35, Cys-38, His-39, and Met-101.

The protein belongs to the cytochrome c family. Post-translationally, binds 1 heme c group covalently per subunit.

Functionally, cytochrome c2 is found mainly in purple, non-sulfur, photosynthetic bacteria where it functions as the electron donor to the oxidized bacteriochlorophyll in the photophosphorylation pathway. However, it may also have a role in the respiratory chain and is found in some non-photosynthetic bacteria. The protein is Cytochrome c2 of Rhodomicrobium vannielii (strain ATCC 17100 / DSM 162 / LMG 4299 / NCIMB 10020 / ATH 3.1.1).